The sequence spans 145 residues: 3-hydroxyacyl-[acyl-carrier-protein] dehydratase FabZ (145 aa).

His-51 is an active-site residue.

The protein belongs to the thioester dehydratase family. FabZ subfamily.

It localises to the cytoplasm. The catalysed reaction is a (3R)-hydroxyacyl-[ACP] = a (2E)-enoyl-[ACP] + H2O. In terms of biological role, involved in unsaturated fatty acids biosynthesis. Catalyzes the dehydration of short chain beta-hydroxyacyl-ACPs and long chain saturated and unsaturated beta-hydroxyacyl-ACPs. This chain is 3-hydroxyacyl-[acyl-carrier-protein] dehydratase FabZ, found in Staphylococcus haemolyticus (strain JCSC1435).